Here is a 337-residue protein sequence, read N- to C-terminus: Diacylglycerol O-acyltransferase 2-like protein 6 (337 aa).

A run of 2 helical transmembrane segments spans residues 22-42 (IPVY…FLLF) and 102-122 (YIIA…NFAT).

The protein belongs to the diacylglycerol acyltransferase family. In terms of tissue distribution, expressed in all tissues tested except pancreas.

It localises to the endoplasmic reticulum membrane. The catalysed reaction is 1,2-di-(9Z-octadecenoyl)-sn-glycerol + (9Z)-octadecenoyl-CoA = 1,2,3-tri-(9Z-octadecenoyl)-glycerol + CoA. The enzyme catalyses 1-O-(9Z-octadecenyl)-glycerol + (9Z)-octadecenoyl-CoA = 1-O-(9Z-octadecyl)-3-(9Z-octadecenoyl)-glycerol + CoA. It catalyses the reaction 1-(9Z-octadecenoyl)-glycerol + (9Z)-octadecenoyl-CoA = 1,2-di-(9Z-octadecenoyl)-glycerol + CoA. Its function is as follows. Diglyceride acyltransferase that uses fatty acyl-CoA as substrate. Particularly active with oleate as a substrate. Has no wax synthase activity to produce wax esters. Able to use 1-monoalkylglycerol (1-MAkG) as an acyl acceptor for the synthesis of monoalkyl-monoacylglycerol (MAMAG). The polypeptide is Diacylglycerol O-acyltransferase 2-like protein 6 (Homo sapiens (Human)).